We begin with the raw amino-acid sequence, 385 residues long: Mannitol-1-phosphate 5-dehydrogenase (385 aa).

3 to 14 is an NAD(+) binding site; it reads ALQFGAGNIGRG.

It belongs to the mannitol dehydrogenase family.

The catalysed reaction is D-mannitol 1-phosphate + NAD(+) = beta-D-fructose 6-phosphate + NADH + H(+). The sequence is that of Mannitol-1-phosphate 5-dehydrogenase from Buchnera aphidicola subsp. Acyrthosiphon pisum (strain Tuc7).